Reading from the N-terminus, the 388-residue chain is 1-deoxy-D-xylulose 5-phosphate reductoisomerase (388 aa).

Thr10, Gly11, Thr12, Ile13, Arg37, Gln38, and Asn122 together coordinate NADPH. Residue Lys123 participates in 1-deoxy-D-xylulose 5-phosphate binding. NADPH is bound at residue Glu124. Asp148 provides a ligand contact to Mn(2+). Positions 149, 150, 179, and 202 each coordinate 1-deoxy-D-xylulose 5-phosphate. Glu150 contributes to the Mn(2+) binding site. Gly208 contacts NADPH. 1-deoxy-D-xylulose 5-phosphate-binding residues include Ser215, Asn220, Lys221, and Glu224. Glu224 provides a ligand contact to Mn(2+).

The protein belongs to the DXR family. Requires Mg(2+) as cofactor. It depends on Mn(2+) as a cofactor.

The enzyme catalyses 2-C-methyl-D-erythritol 4-phosphate + NADP(+) = 1-deoxy-D-xylulose 5-phosphate + NADPH + H(+). The protein operates within isoprenoid biosynthesis; isopentenyl diphosphate biosynthesis via DXP pathway; isopentenyl diphosphate from 1-deoxy-D-xylulose 5-phosphate: step 1/6. Functionally, catalyzes the NADPH-dependent rearrangement and reduction of 1-deoxy-D-xylulose-5-phosphate (DXP) to 2-C-methyl-D-erythritol 4-phosphate (MEP). The chain is 1-deoxy-D-xylulose 5-phosphate reductoisomerase from Laribacter hongkongensis (strain HLHK9).